The chain runs to 86 residues: Putative membrane protein insertion efficiency factor (86 aa).

The tract at residues 66 to 86 (PLHEGGDDPVPPRKNDDNREN) is disordered.

It belongs to the UPF0161 family.

Its subcellular location is the cell inner membrane. Could be involved in insertion of integral membrane proteins into the membrane. This chain is Putative membrane protein insertion efficiency factor, found in Proteus mirabilis (strain HI4320).